A 610-amino-acid chain; its full sequence is Ubiquilin-like protein (610 aa).

In terms of domain architecture, Ubiquitin-like spans 31 to 105 (IRVIVKTPGN…IHVVIKSKHG (75 aa)). One can recognise a UBA domain in the interval 562 to 607 (QAPEVRFSKEMECLQAMGFVNYNANLQALIATDGDTNAAIYKLKSS).

The chain is Ubiquilin-like protein (Ubqlnl) from Mus musculus (Mouse).